A 256-amino-acid polypeptide reads, in one-letter code: Thiazole synthase (256 aa).

Catalysis depends on lysine 96, which acts as the Schiff-base intermediate with DXP. Residues glycine 157, 183–184 (AG), and 205–206 (NT) contribute to the 1-deoxy-D-xylulose 5-phosphate site.

This sequence belongs to the ThiG family. Homotetramer. Forms heterodimers with either ThiH or ThiS.

The protein resides in the cytoplasm. It carries out the reaction [ThiS sulfur-carrier protein]-C-terminal-Gly-aminoethanethioate + 2-iminoacetate + 1-deoxy-D-xylulose 5-phosphate = [ThiS sulfur-carrier protein]-C-terminal Gly-Gly + 2-[(2R,5Z)-2-carboxy-4-methylthiazol-5(2H)-ylidene]ethyl phosphate + 2 H2O + H(+). It functions in the pathway cofactor biosynthesis; thiamine diphosphate biosynthesis. Functionally, catalyzes the rearrangement of 1-deoxy-D-xylulose 5-phosphate (DXP) to produce the thiazole phosphate moiety of thiamine. Sulfur is provided by the thiocarboxylate moiety of the carrier protein ThiS. In vitro, sulfur can be provided by H(2)S. The polypeptide is Thiazole synthase (Bacillus cereus (strain G9842)).